Consider the following 453-residue polypeptide: Phosphoglucosamine mutase (453 aa).

Ser105 serves as the catalytic Phosphoserine intermediate. Residues Ser105, Asp244, Asp246, and Asp248 each coordinate Mg(2+). Residue Ser105 is modified to Phosphoserine.

It belongs to the phosphohexose mutase family. Requires Mg(2+) as cofactor. Activated by phosphorylation.

The enzyme catalyses alpha-D-glucosamine 1-phosphate = D-glucosamine 6-phosphate. Catalyzes the conversion of glucosamine-6-phosphate to glucosamine-1-phosphate. The protein is Phosphoglucosamine mutase of Chromohalobacter salexigens (strain ATCC BAA-138 / DSM 3043 / CIP 106854 / NCIMB 13768 / 1H11).